The sequence spans 273 residues: Glutamate racemase (273 aa).

Residues 7 to 8 (DS) and 39 to 40 (YG) each bind substrate. Cys70 acts as the Proton donor/acceptor in catalysis. 71–72 (NT) serves as a coordination point for substrate. The active-site Proton donor/acceptor is the Cys194. 195-196 (TH) provides a ligand contact to substrate.

This sequence belongs to the aspartate/glutamate racemases family.

The enzyme catalyses L-glutamate = D-glutamate. Its pathway is cell wall biogenesis; peptidoglycan biosynthesis. In terms of biological role, provides the (R)-glutamate required for cell wall biosynthesis. This is Glutamate racemase from Dinoroseobacter shibae (strain DSM 16493 / NCIMB 14021 / DFL 12).